Here is a 166-residue protein sequence, read N- to C-terminus: Transcription antitermination protein NusB (166 aa).

The span at 1–18 (MISDESDRFNPRDPKPAD) shows a compositional bias: basic and acidic residues. Residues 1 to 28 (MISDESDRFNPRDPKPADAGKPSKSAKR) are disordered.

The protein belongs to the NusB family.

Its function is as follows. Involved in transcription antitermination. Required for transcription of ribosomal RNA (rRNA) genes. Binds specifically to the boxA antiterminator sequence of the ribosomal RNA (rrn) operons. This Pseudomonas putida (strain W619) protein is Transcription antitermination protein NusB.